Consider the following 545-residue polypeptide: Cryptochrome-1 (545 aa).

The Photolyase/cryptochrome alpha/beta domain maps to 3–140 (INNILWFRHG…RCVENVSHTL (138 aa)). FAD contacts are provided by residues Arg237, Ser265, Ser267, Gln308, His375, 407-409 (DAD), Cys413, and Asn416.

The protein belongs to the DNA photolyase class-1 family. Interacts with tim and per; promoted by light conditions. FAD serves as cofactor.

Its subcellular location is the cytoplasm. The protein localises to the perinuclear region. It is found in the nucleus. In terms of biological role, blue light-dependent regulator that is the input of the circadian feedback loop. Has no photolyase activity for cyclobutane pyrimidine dimers or 6-4 photoproducts. Regulation of expression by light suggests a role in photoreception for locomotor activity rhythms. Functions, together with per, as a transcriptional repressor required for the oscillation of peripheral circadian clocks and for the correct specification of clock cells. Genes directly activated by the transcription factors Clock (Clk) and cycle (cyc) are repressed by cry. In Anopheles gambiae (African malaria mosquito), this protein is Cryptochrome-1.